The sequence spans 572 residues: Serine/threonine-protein kinase pak-1 (572 aa).

Disordered stretches follow at residues 1–71 (MKAF…SRPS) and 156–195 (QPYS…QGVP). Residues 67–80 (ISRPSNFEHTIHVG) enclose the CRIB domain. The segment at 81-294 (YDPKTGEFTG…IVSIGNPDRK (214 aa)) is linker. Polar residues predominate over residues 178 to 195 (PMTTSTSSAGYNSKQGVP). The region spanning 295–546 (YRKVDKIGSG…ASQLLTHPFL (252 aa)) is the Protein kinase domain. ATP contacts are provided by residues 301-309 (IGSGASGSV) and Lys-324. Residue Asp-414 is the Proton acceptor of the active site.

Belongs to the protein kinase superfamily. STE Ser/Thr protein kinase family. STE20 subfamily. In terms of assembly, interacts with cdc-42 (GTP-bound form) and cedd-10 (GTP-bound form). Mg(2+) is required as a cofactor. Requires Mn(2+) as cofactor. In terms of tissue distribution, specifically colocalized with cdc-42 and ced-10 at all hypodermal cell boundaries during embryo elongation throughout the second phase of embryogenesis. Expressed mainly in pharyngeal muscles, the CAN neurons, motor neurons in the ventral nerve cord, several cells in the tail region (including the B and Y cells from L1 to adult, the hypodermal blast cell T in the L1 and some of its progeny in later stages), and the distal tip cells.

Its subcellular location is the cell membrane. The protein resides in the cytoplasm. It localises to the cell projection. It is found in the axon. The protein localises to the perikaryon. It carries out the reaction L-seryl-[protein] + ATP = O-phospho-L-seryl-[protein] + ADP + H(+). The catalysed reaction is L-threonyl-[protein] + ATP = O-phospho-L-threonyl-[protein] + ADP + H(+). Required for hypodermal cell fusion, together with cdc-42 and ced-10, leading to embryonic body elongation, which involves dramatic cytoskeletal reorganization. Plays a redundant role with max-2 in dorsal axonal guidance in ventral cord commissural motoneurons and in P neuroblast migration. Acts probably downstream of Rho GTPases mig-2 and ced-10 to regulate these 2 processes. Involved in orientating axonal growth of HSN neurons. During gonad morphogenesis and probably in association with pix-1 and git-1, involved in the migration of distal tip cell (DTC) and in maintaining their sharp tapering morphology. In addition, plays a redundant role with max-2 in DTC-mediated guidance of gonad elongation. May phosphorylate mlc-4. The sequence is that of Serine/threonine-protein kinase pak-1 (pak-1) from Caenorhabditis elegans.